Consider the following 482-residue polypeptide: Cobyric acid synthase (482 aa).

The GATase cobBQ-type domain occupies Q249–F436. C331 acts as the Nucleophile in catalysis. Residue H428 is part of the active site.

This sequence belongs to the CobB/CobQ family. CobQ subfamily.

It participates in cofactor biosynthesis; adenosylcobalamin biosynthesis. Catalyzes amidations at positions B, D, E, and G on adenosylcobyrinic A,C-diamide. NH(2) groups are provided by glutamine, and one molecule of ATP is hydrogenolyzed for each amidation. The protein is Cobyric acid synthase of Bradyrhizobium diazoefficiens (strain JCM 10833 / BCRC 13528 / IAM 13628 / NBRC 14792 / USDA 110).